A 463-amino-acid polypeptide reads, in one-letter code: Elongation factor 1-alpha (463 aa).

Residues 5–242 (KTHINIVVIG…DAILPPARPT (238 aa)) enclose the tr-type G domain. Residues 14 to 21 (GHVDSGKS) form a G1 region. 14–21 (GHVDSGKS) lines the GTP pocket. The interval 70–74 (GITID) is G2. Positions 91–94 (DAPG) are G3. GTP-binding positions include 91-95 (DAPGH) and 153-156 (NKMD). The G4 stretch occupies residues 153-156 (NKMD). Positions 194-196 (SGW) are G5. 5-glutamyl glycerylphosphorylethanolamine is present on residues E301 and E374.

This sequence belongs to the TRAFAC class translation factor GTPase superfamily. Classic translation factor GTPase family. EF-Tu/EF-1A subfamily.

The protein resides in the cytoplasm. Functionally, this protein promotes the GTP-dependent binding of aminoacyl-tRNA to the A-site of ribosomes during protein biosynthesis. This Bombyx mori (Silk moth) protein is Elongation factor 1-alpha.